A 374-amino-acid chain; its full sequence is Queuine tRNA-ribosyltransferase (374 aa).

The Proton acceptor role is filled by D89. Substrate contacts are provided by residues D89–F93, D143, Q187, and G214. Residues G245–D251 form an RNA binding region. D264 (nucleophile) is an active-site residue. The tract at residues T269 to R273 is RNA binding; important for wobble base 34 recognition. Zn(2+) is bound by residues C302, C304, C307, and H333.

It belongs to the queuine tRNA-ribosyltransferase family. Homodimer. Within each dimer, one monomer is responsible for RNA recognition and catalysis, while the other monomer binds to the replacement base PreQ1. Zn(2+) is required as a cofactor.

The enzyme catalyses 7-aminomethyl-7-carbaguanine + guanosine(34) in tRNA = 7-aminomethyl-7-carbaguanosine(34) in tRNA + guanine. Its pathway is tRNA modification; tRNA-queuosine biosynthesis. In terms of biological role, catalyzes the base-exchange of a guanine (G) residue with the queuine precursor 7-aminomethyl-7-deazaguanine (PreQ1) at position 34 (anticodon wobble position) in tRNAs with GU(N) anticodons (tRNA-Asp, -Asn, -His and -Tyr). Catalysis occurs through a double-displacement mechanism. The nucleophile active site attacks the C1' of nucleotide 34 to detach the guanine base from the RNA, forming a covalent enzyme-RNA intermediate. The proton acceptor active site deprotonates the incoming PreQ1, allowing a nucleophilic attack on the C1' of the ribose to form the product. After dissociation, two additional enzymatic reactions on the tRNA convert PreQ1 to queuine (Q), resulting in the hypermodified nucleoside queuosine (7-(((4,5-cis-dihydroxy-2-cyclopenten-1-yl)amino)methyl)-7-deazaguanosine). This is Queuine tRNA-ribosyltransferase from Shewanella sp. (strain W3-18-1).